Consider the following 600-residue polypeptide: Aspartate--tRNA(Asp/Asn) ligase (600 aa).

Residue Glu-174 coordinates L-aspartate. Positions 198 to 201 are aspartate; it reads QLFK. Arg-220 is a binding site for L-aspartate. Residues 220-222 and Gln-229 contribute to the ATP site; that span reads RDE. His-457 lines the L-aspartate pocket. Glu-491 is a binding site for ATP. Arg-498 lines the L-aspartate pocket. ATP is bound at residue 543–546; it reads GLDR.

It belongs to the class-II aminoacyl-tRNA synthetase family. Type 1 subfamily. In terms of assembly, homodimer.

It localises to the cytoplasm. It catalyses the reaction tRNA(Asx) + L-aspartate + ATP = L-aspartyl-tRNA(Asx) + AMP + diphosphate. In terms of biological role, aspartyl-tRNA synthetase with relaxed tRNA specificity since it is able to aspartylate not only its cognate tRNA(Asp) but also tRNA(Asn). Reaction proceeds in two steps: L-aspartate is first activated by ATP to form Asp-AMP and then transferred to the acceptor end of tRNA(Asp/Asn). This chain is Aspartate--tRNA(Asp/Asn) ligase, found in Burkholderia orbicola (strain MC0-3).